The following is a 600-amino-acid chain: Elongation factor 4 (600 aa).

Residues 5–187 form the tr-type G domain; that stretch reads SRIRNFSIIA…DLIKKIPPPK (183 aa). Residues 17 to 22 and 134 to 137 contribute to the GTP site; these read DHGKST and NKMD.

It belongs to the TRAFAC class translation factor GTPase superfamily. Classic translation factor GTPase family. LepA subfamily.

The protein localises to the cell inner membrane. The enzyme catalyses GTP + H2O = GDP + phosphate + H(+). Required for accurate and efficient protein synthesis under certain stress conditions. May act as a fidelity factor of the translation reaction, by catalyzing a one-codon backward translocation of tRNAs on improperly translocated ribosomes. Back-translocation proceeds from a post-translocation (POST) complex to a pre-translocation (PRE) complex, thus giving elongation factor G a second chance to translocate the tRNAs correctly. Binds to ribosomes in a GTP-dependent manner. The chain is Elongation factor 4 from Marinobacter nauticus (strain ATCC 700491 / DSM 11845 / VT8) (Marinobacter aquaeolei).